A 701-amino-acid chain; its full sequence is Long chain acyl-CoA synthetase 6, peroxisomal (701 aa).

Residues Met-1–Thr-38 constitute a propeptide, removed in mature form. The Microbody targeting signal motif lies at Arg-15–Leu-23. An ATP-binding site is contributed by Ile-266–Lys-277. Positions Asp-526–Lys-550 are fatty acid-binding.

Belongs to the ATP-dependent AMP-binding enzyme family. Requires Mg(2+) as cofactor. As to expression, expressed in roots, stems, leaves flowers and germinating seedling. Preferentially expressed in seeds and senescent leaves.

The protein localises to the peroxisome. The protein resides in the glyoxysome membrane. It carries out the reaction a long-chain fatty acid + ATP + CoA = a long-chain fatty acyl-CoA + AMP + diphosphate. The enzyme catalyses tetradecanoate + ATP + CoA = tetradecanoyl-CoA + AMP + diphosphate. The catalysed reaction is hexadecanoate + ATP + CoA = hexadecanoyl-CoA + AMP + diphosphate. It catalyses the reaction (9Z)-octadecenoate + ATP + CoA = (9Z)-octadecenoyl-CoA + AMP + diphosphate. It carries out the reaction (9Z,12Z)-octadecadienoate + ATP + CoA = (9Z,12Z)-octadecadienoyl-CoA + AMP + diphosphate. The enzyme catalyses (9Z,12Z,15Z)-octadecatrienoate + ATP + CoA = (9Z,12Z,15Z)-octadecatrienoyl-CoA + AMP + diphosphate. The protein operates within lipid metabolism; fatty acid metabolism. Its function is as follows. Activation of long-chain fatty acids for both synthesis of cellular lipids, and degradation via beta-oxidation. Preferentially uses palmitate, palmitoleate, oleate, linoleate and eicosenoate as substrates. Can use myristate and linolenate as substrates. May play a regulatory role both in fatty acid import into glyoxysomes and in fatty acid beta-oxidation. Functions redundantly with LACS7 in lipid mobilization for beta-oxidation during seed germination, which is essential for postgerminative growth and seedling establishment. The sequence is that of Long chain acyl-CoA synthetase 6, peroxisomal from Arabidopsis thaliana (Mouse-ear cress).